A 91-amino-acid chain; its full sequence is Elongation factor 1-beta (91 aa).

The protein belongs to the EF-1-beta/EF-1-delta family.

In terms of biological role, promotes the exchange of GDP for GTP in EF-1-alpha/GDP, thus allowing the regeneration of EF-1-alpha/GTP that could then be used to form the ternary complex EF-1-alpha/GTP/AAtRNA. The polypeptide is Elongation factor 1-beta (ef1b) (Pyrococcus horikoshii (strain ATCC 700860 / DSM 12428 / JCM 9974 / NBRC 100139 / OT-3)).